Consider the following 37-residue polypeptide: Protease 2 large chain (37 aa).

Residues Asn1–Gly14 are compositionally biased toward basic and acidic residues. Residues Asn1–Val37 form a disordered region. The segment covering Ala28–Val37 has biased composition (polar residues).

This sequence belongs to the peptidase S8 family. As to quaternary structure, heterodimer of a large and a small chain.

It localises to the secreted. The chain is Protease 2 large chain from Achromobacter lyticus.